Here is a 334-residue protein sequence, read N- to C-terminus: Terpene synthase 1 (334 aa).

2 residues coordinate Mg(2+): aspartate 82 and aspartate 86. The short motif at 82 to 86 (DDIFD) is the D(D/E)XX(D/E) motif element. Arginine 184 provides a ligand contact to substrate. The Mg(2+) site is built by asparagine 230, serine 234, and glutamate 238. The short motif at 230–238 (NDIYSYHRE) is the NSE motif element. Residues 309–316 (WSESCTRY) carry the WxxxxxRY motif motif.

It belongs to the terpene synthase family. The cofactor is Mg(2+).

The catalysed reaction is (2E,6E)-farnesyl diphosphate = gamma-muurolene + diphosphate. It catalyses the reaction (2E,6E)-farnesyl diphosphate = alpha-muurolene + diphosphate. It carries out the reaction (2E,6E)-farnesyl diphosphate = (-)-(E)-beta-caryophyllene + diphosphate. The enzyme catalyses (2E)-geranyl diphosphate = beta-myrcene + diphosphate. Functionally, terpene synthase that catalyzes the cyclization of farnesyl diphosphate (FPP) into a mixture of sesquiterpenes with gamma-muurolene as the most abundant compound and (-)-beta-caryophyllene, alpha-muurolene, and 4 unidentified sesquiterpenes as minor compoundss. TPS1 also shows monoterpene synthase activity and can also use geranyl diphosphate (GPP) as a substrate to convert it into a mixture of cyclic and acyclic monoterpenes, including myrcene and linalool. P.polycephalum has a unique biology and these volatile terpenoids could function in internal communication of P.polycephalum, to mark the territory that have been explored, or they may be involved in chemotaxis. The chain is Terpene synthase 1 from Physarum polycephalum (Slime mold).